Here is a 136-residue protein sequence, read N- to C-terminus: Ribonuclease P protein component (136 aa).

Belongs to the RnpA family. As to quaternary structure, consists of a catalytic RNA component (M1 or rnpB) and a protein subunit.

The catalysed reaction is Endonucleolytic cleavage of RNA, removing 5'-extranucleotides from tRNA precursor.. In terms of biological role, RNaseP catalyzes the removal of the 5'-leader sequence from pre-tRNA to produce the mature 5'-terminus. It can also cleave other RNA substrates such as 4.5S RNA. The protein component plays an auxiliary but essential role in vivo by binding to the 5'-leader sequence and broadening the substrate specificity of the ribozyme. In Burkholderia mallei (strain NCTC 10247), this protein is Ribonuclease P protein component.